The following is a 368-amino-acid chain: 1-deoxy-D-xylulose 5-phosphate reductoisomerase (368 aa).

8 residues coordinate NADPH: Thr-7, Gly-8, Ser-9, Ile-10, Gly-31, Lys-32, Asn-33, and Asn-113. Lys-114 is a 1-deoxy-D-xylulose 5-phosphate binding site. Glu-115 contributes to the NADPH binding site. Mn(2+) is bound at residue Asp-133. The 1-deoxy-D-xylulose 5-phosphate site is built by Ser-134, Glu-135, Ser-158, and His-181. Glu-135 is a binding site for Mn(2+). Gly-187 is a binding site for NADPH. 1-deoxy-D-xylulose 5-phosphate-binding residues include Ser-194, Asn-199, Lys-200, and Glu-203. Glu-203 lines the Mn(2+) pocket.

It belongs to the DXR family. Requires Mg(2+) as cofactor. Mn(2+) serves as cofactor.

The catalysed reaction is 2-C-methyl-D-erythritol 4-phosphate + NADP(+) = 1-deoxy-D-xylulose 5-phosphate + NADPH + H(+). It functions in the pathway isoprenoid biosynthesis; isopentenyl diphosphate biosynthesis via DXP pathway; isopentenyl diphosphate from 1-deoxy-D-xylulose 5-phosphate: step 1/6. Its function is as follows. Catalyzes the NADPH-dependent rearrangement and reduction of 1-deoxy-D-xylulose-5-phosphate (DXP) to 2-C-methyl-D-erythritol 4-phosphate (MEP). The polypeptide is 1-deoxy-D-xylulose 5-phosphate reductoisomerase (Helicobacter pylori (strain HPAG1)).